A 123-amino-acid chain; its full sequence is Small ribosomal subunit protein uS13c (123 aa).

Residues 89–123 are disordered; the sequence is RGKRHRNNLPVRGQRTRTNARSRRGSKKTVTGKKK. Residues 102 to 123 are compositionally biased toward basic residues; it reads QRTRTNARSRRGSKKTVTGKKK.

Belongs to the universal ribosomal protein uS13 family. Part of the 30S ribosomal subunit.

The protein localises to the plastid. It localises to the chloroplast. Its function is as follows. Located at the top of the head of the 30S subunit, it contacts several helices of the 16S rRNA. In Phaeodactylum tricornutum (strain CCAP 1055/1), this protein is Small ribosomal subunit protein uS13c.